Reading from the N-terminus, the 708-residue chain is Leukotoxin translocation ATP-binding protein LktB (708 aa).

One can recognise a Peptidase C39 domain in the interval 1–126; the sequence is MEVNHQSNDL…SCYQGKIILV (126 aa). One can recognise an ABC transmembrane type-1 domain in the interval 155–437; it reads FLETLLVSIF…LAQLWQDFTQ (283 aa). The next 5 membrane-spanning stretches (helical) occupy residues 159-179, 192-212, 270-290, 296-316, and 389-409; these read LLVS…FQVV, LNII…LSGL, ALTS…MWYY, LVIL…SPIL, and VMVI…LSIG. An ABC transporter domain is found at 469–704; that stretch reads IAFKNIRFRY…NNGLYSYLHQ (236 aa). 503–510 contributes to the ATP binding site; sequence GRSGSGKS.

This sequence belongs to the ABC transporter superfamily. Protein-1 exporter (TC 3.A.1.109) family. As to quaternary structure, homodimer.

Its subcellular location is the cell inner membrane. It carries out the reaction ATP + H2O + proteinSide 1 = ADP + phosphate + proteinSide 2.. In terms of biological role, part of the ABC transporter complex LktBD involved in leukotoxin export. Transmembrane domains (TMD) form a pore in the inner membrane and the ATP-binding domain (NBD) is responsible for energy generation. This chain is Leukotoxin translocation ATP-binding protein LktB (lktB), found in Pasteurella haemolytica-like sp. (strain 5943B).